A 226-amino-acid polypeptide reads, in one-letter code: Ribonuclease 3 (226 aa).

The RNase III domain occupies 6–128; it reads INRLQRKLGY…LIGGVFLDSD (123 aa). Residue glutamate 41 coordinates Mg(2+). Aspartate 45 is an active-site residue. Mg(2+)-binding residues include aspartate 114 and glutamate 117. Glutamate 117 is a catalytic residue. The 71-residue stretch at 155 to 225 folds into the DRBM domain; that stretch reads DPKTRLQEYL…AEQALKKLEL (71 aa).

It belongs to the ribonuclease III family. As to quaternary structure, homodimer. Mg(2+) is required as a cofactor.

Its subcellular location is the cytoplasm. The catalysed reaction is Endonucleolytic cleavage to 5'-phosphomonoester.. Its function is as follows. Digests double-stranded RNA. Involved in the processing of primary rRNA transcript to yield the immediate precursors to the large and small rRNAs (23S and 16S). Processes some mRNAs, and tRNAs when they are encoded in the rRNA operon. Processes pre-crRNA and tracrRNA of type II CRISPR loci if present in the organism. The protein is Ribonuclease 3 of Klebsiella pneumoniae (strain 342).